The sequence spans 172 residues: Translation initiation factor IF-3 (172 aa).

The protein belongs to the IF-3 family. Monomer.

It localises to the cytoplasm. In terms of biological role, IF-3 binds to the 30S ribosomal subunit and shifts the equilibrium between 70S ribosomes and their 50S and 30S subunits in favor of the free subunits, thus enhancing the availability of 30S subunits on which protein synthesis initiation begins. This chain is Translation initiation factor IF-3, found in Geobacillus stearothermophilus (Bacillus stearothermophilus).